We begin with the raw amino-acid sequence, 150 residues long: 16.9 kDa class I heat shock protein 1 (150 aa).

The tract at residues 1–42 (MSLVRRSNVFDPFSLDLWDPFDSVFRSVVPATSDNDTAAFAN) is important for thermostability under elevated temperature. The region spanning 36 to 150 (DTAAFANARI…PEVKAIEISG (115 aa)) is the sHSP domain.

It belongs to the small heat shock protein (HSP20) family. As to quaternary structure, forms oligomeric structures.

It is found in the cytoplasm. This chain is 16.9 kDa class I heat shock protein 1 (HSP16.9A), found in Oryza sativa subsp. japonica (Rice).